Consider the following 262-residue polypeptide: MVSVKPIPAEVVENREECERTIVLRLRPERPIRWEPGQFLMLGISGVDEKPMAFSGGDDREFELTIEIVGPFTERCADLEPGDVVWVRGPYGKPFEVRGSRAVVVAGGTGVAPLVPLVERLRRARVHVTSVLGGPHADRLPRKDDLEKLSDELYVTTEDGSEGRKGFPTDVLEELVEKECPDVVYACGPEGMLVRVAEIAREHDVPCQVSVVRYVKCGEGICGSCALGKGLLVCRDGPVFWTEELEGTEFGGVRRDVTGKPE.

The region spanning 4–97 is the FAD-binding FR-type domain; that stretch reads VKPIPAEVVE…RGPYGKPFEV (94 aa). [2Fe-2S] cluster contacts are provided by Cys-217, Cys-222, Cys-225, and Cys-234.

This sequence belongs to the PyrK family. In terms of assembly, heterotetramer of 2 PyrK and 2 PyrD type B subunits. [2Fe-2S] cluster serves as cofactor. The cofactor is FAD.

The protein operates within pyrimidine metabolism; UMP biosynthesis via de novo pathway; orotate from (S)-dihydroorotate (NAD(+) route): step 1/1. Its function is as follows. Responsible for channeling the electrons from the oxidation of dihydroorotate from the FMN redox center in the PyrD type B subunit to the ultimate electron acceptor NAD(+). The polypeptide is Probable dihydroorotate dehydrogenase B (NAD(+)), electron transfer subunit (Methanopyrus kandleri (strain AV19 / DSM 6324 / JCM 9639 / NBRC 100938)).